A 357-amino-acid polypeptide reads, in one-letter code: Dihydroorotate dehydrogenase (quinone) (357 aa).

Residues 66-70 and threonine 90 each bind FMN; that span reads AGFDK. Position 70 (lysine 70) interacts with substrate. 115–119 is a substrate binding site; that stretch reads NRMGF. FMN-binding residues include asparagine 143 and asparagine 176. A substrate-binding site is contributed by asparagine 176. Residue serine 179 is the Nucleophile of the active site. Residue asparagine 181 coordinates substrate. Residues lysine 212 and threonine 240 each coordinate FMN. 241 to 242 provides a ligand contact to substrate; it reads NT. FMN contacts are provided by residues glycine 264, glycine 293, and 314–315; that span reads YT.

This sequence belongs to the dihydroorotate dehydrogenase family. Type 2 subfamily. Monomer. FMN serves as cofactor.

The protein resides in the cell membrane. It catalyses the reaction (S)-dihydroorotate + a quinone = orotate + a quinol. It functions in the pathway pyrimidine metabolism; UMP biosynthesis via de novo pathway; orotate from (S)-dihydroorotate (quinone route): step 1/1. Its function is as follows. Catalyzes the conversion of dihydroorotate to orotate with quinone as electron acceptor. In Mycobacterium tuberculosis (strain ATCC 25177 / H37Ra), this protein is Dihydroorotate dehydrogenase (quinone).